The primary structure comprises 103 residues: Small ribosomal subunit protein uS14c (103 aa).

Belongs to the universal ribosomal protein uS14 family. Part of the 30S ribosomal subunit.

The protein resides in the plastid. Its subcellular location is the chloroplast. Binds 16S rRNA, required for the assembly of 30S particles. This chain is Small ribosomal subunit protein uS14c, found in Agrostis stolonifera (Creeping bentgrass).